Here is a 166-residue protein sequence, read N- to C-terminus: Photosystem I assembly protein Ycf3 (166 aa).

TPR repeat units lie at residues 35 to 68 (AFVYYRDGMSAQAEGEYAEALQNYAQAMRLEVDP), 72 to 105 (SFIFYNIGLIHTSNGEHTKALEYYYQALDRNPSL), and 120 to 153 (GEQALAAGNIPDSETLFEKAAEYWKEAIRLAPLN).

This sequence belongs to the Ycf3 family.

The protein localises to the plastid. It localises to the chloroplast thylakoid membrane. In terms of biological role, essential for the assembly of the photosystem I (PSI) complex. May act as a chaperone-like factor to guide the assembly of the PSI subunits. In Ostreococcus tauri, this protein is Photosystem I assembly protein Ycf3.